The following is a 218-amino-acid chain: Cold-regulated protein 28 (218 aa).

Disordered regions lie at residues 1–51 (MEND…ADSK) and 166–218 (TKHS…KPRT). Positions 20–37 (EASAESQSESTLSNSLDS) are enriched in low complexity. A compositionally biased stretch (basic and acidic residues) spans 186 to 207 (GEVSKKREREANNDDSSLKEDQ).

The protein resides in the nucleus. Functionally, together with COR27, involved in central circadian clock regulation and in flowering promotion, by binding to the chromatin of clock-associated evening genes TOC1, PRR5, ELF4 and cold-responsive genes in order to repress their transcription. Negative regulator of freezing tolerance. This Arabidopsis thaliana (Mouse-ear cress) protein is Cold-regulated protein 28.